The sequence spans 338 residues: P2Y purinoceptor 14 (338 aa).

Residues 1-29 lie on the Extracellular side of the membrane; that stretch reads MINSTSTQPPDESCSQNLLITQQIIPVLY. Asn3 carries N-linked (GlcNAc...) asparagine glycosylation. Residues 30–50 form a helical membrane-spanning segment; sequence CMVFIAGILLNGVSGWIFFYV. Residues 51 to 55 lie on the Cytoplasmic side of the membrane; it reads PSSKS. The helical transmembrane segment at 56 to 76 threads the bilayer; the sequence is FIIYLKNIVIADFVMSLTFPF. At 77–96 the chain is on the extracellular side; sequence KILGDSGLGPWQLNVFVCRV. A disulfide bridge links Cys94 with Cys172. Residues 97-117 traverse the membrane as a helical segment; that stretch reads SAVLFYVNMYVSIVFFGLISF. Residues 118–139 are Cytoplasmic-facing; the sequence is DRYYKIVKPLWTSFIQSVSYSK. The chain crosses the membrane as a helical span at residues 140–160; it reads LLSVIVWMLMLLLAVPNIILT. Residue Asn161 is glycosylated (N-linked (GlcNAc...) asparagine). Residues 161–188 lie on the Extracellular side of the membrane; sequence NQSVREVTQIKCIELKSELGRKWHKASN. The chain crosses the membrane as a helical span at residues 189-209; sequence YIFVAIFWIVFLLLIVFYTAI. Residues 210–234 lie on the Cytoplasmic side of the membrane; sequence TKKIFKSHLKSSRNSTSVKKKSSRN. A helical membrane pass occupies residues 235 to 255; the sequence is IFSIVFVFFVCFVPYHIARIP. At 256–278 the chain is on the extracellular side; sequence YTKSQTEAHYSCQSKEILRYMKE. A helical transmembrane segment spans residues 279–299; it reads FTLLLSAANVCLDPIIYFFLC. Residues 300 to 338 are Cytoplasmic-facing; it reads QPFREILCKKLHIPLKAQNDLDISRIKRGNTTLESTDTL.

It belongs to the G-protein coupled receptor 1 family. In terms of tissue distribution, highest expression in the placenta, adipose tissue, stomach and intestine, intermediate levels in the brain, spleen, lung and heart, lowest levels in the kidney.

The protein resides in the cell membrane. In terms of biological role, receptor for UDP-glucose and other UDP-sugar coupled to G-proteins. Not activated by ATP, ADP, UTP or ATP. The polypeptide is P2Y purinoceptor 14 (P2RY14) (Homo sapiens (Human)).